The sequence spans 404 residues: MLTTSLTLNKEKWKPIWNKALVFLFVATYFLDGITRYKHLIIILMVITAIYQVSRSPKSFPPLFKNSVFYSVAVLSLILVYSILISPDMKESFKEFENTVLEGFLLYTLLIPVLLKDETKETVAKIVLFSFLTSLGLRCLAESILYIEDYNKGIMPFISYAHRHMSDSMVFLFPALLNIWLFRKNAIKLVFLVLSAIYLFFILGTLSRGAWLAVLIVGVLWAILNRQWKLIGVGAILLAIIGALVITQHNNKPDPEHLLYKLQQTDSSYRYTNGTQGTAWILIQENPIKGYGYGNDVYDGVYNKRVVDYPTWTFKESIGPHNTILYIWFSAGILGLASLVYLYGAIIRETASSTLRKVEISPYNAHLLLFLSFVGFYIVRGNFEQVDIAQIGIITGFLLALRNR.

The next 11 membrane-spanning stretches (helical) occupy residues I16–D32, H39–R55, S67–L84, F96–L115, V127–I147, S168–R183, L189–W221, W228–I246, I324–Y343, Y363–V379, and Q385–L401.

The protein belongs to the O-antigen ligase family.

The protein localises to the cell inner membrane. It carries out the reaction a lipid-linked O antigen + a lipid A-core oligosaccharide = a lipopolysaccharide + a polyisoprenyl diphosphate.. Its pathway is bacterial outer membrane biogenesis; lipopolysaccharide biosynthesis. Functionally, transferase involved in the biosynthesis of the lipopolysaccharide (LPS). Catalyzes the transfer of a polymerized O-antigen molecule from its polyprenyl diphosphate membrane anchor to a terminal sugar of the lipid A-core oligosaccharide, finalizing the biosynthesis of the lipopolysaccharide. May also be involved in a feedback mechanism to regulate O-unit synthesis, based on the availability of O units on the periplasmic face of the membrane. This is O-antigen ligase from Salmonella typhimurium (strain LT2 / SGSC1412 / ATCC 700720).